A 195-amino-acid chain; its full sequence is Interferon omega-1 (195 aa).

Residues 1–21 constitute a signal peptide (or 23 in some molecules); that stretch reads MALLFPLLAALVMTSYSPVGS. Disulfide bonds link C24-C122 and C52-C162. N-linked (GlcNAc...) asparagine glycosylation is present at N101.

The protein belongs to the alpha/beta interferon family.

Its subcellular location is the secreted. In Homo sapiens (Human), this protein is Interferon omega-1 (IFNW1).